The following is a 567-amino-acid chain: Ran-binding protein 3 (567 aa).

Positions 1-10 are enriched in basic and acidic residues; it reads MADLANEEKP. 3 disordered regions span residues 1 to 263, 332 to 373, and 515 to 567; these read MADL…FVFG, LSPP…AESA, and VEQE…TGST. An N-acetylalanine modification is found at alanine 2. N6-acetyllysine occurs at positions 9 and 21. Positions 39 to 49 are enriched in basic and acidic residues; the sequence is EEPRGEAEAPH. At threonine 75 the chain carries Phosphothreonine. The span at 75–89 shows a compositional bias: pro residues; that stretch reads TPPPPAPEAQLPPFP. Phosphoserine is present on residues serine 100, serine 101, and serine 108. Residues 117 to 125 carry the Nuclear localization signal motif; sequence PPVKRERTS. Threonine 124 is subject to Phosphothreonine. 2 stretches are compositionally biased toward polar residues: residues 125-134 and 184-197; these read SSLTQFPPSQ and ALSQ…TNGV. A Phosphoserine modification is found at serine 126. Phosphoserine is present on residues serine 219, serine 333, serine 353, serine 355, and serine 372. Low complexity predominate over residues 347 to 362; the sequence is ENAAAESGSESSSQEA. Residues 378–518 enclose the RanBD1 domain; sequence KATARKCLLE…LALRSRVEQE (141 aa). Positions 534 to 544 are enriched in acidic residues; that stretch reads NEEDDSDDDDV. Serine 539 carries the post-translational modification Phosphoserine. Positions 549 to 567 are enriched in low complexity; it reads GATAAGAGDEGDGQTTGST.

As to quaternary structure, interacts with CHC1 in a Ran-stimulated manner. Interacts with XPO1. Interacts (via its C-terminal R domain) with SMAD2 (dephosphorylated form via its MH1 and MH2 domains); the interaction results in the nuclear export of SMAD2 and termination of the TGF-beta signaling. Interacts (via its C-terminal R domain) with SMAD3 (dephosphorylated form via its MH1 domain); the interaction results in the nuclear export of SMAD3 and termination of the TGF-beta signaling. In terms of processing, phosphorylation at Ser-126 promotes its import into the nucleus. Widely expressed with high levels in testis and heart.

The protein resides in the cytoplasm. Its subcellular location is the nucleus. In terms of biological role, acts as a cofactor for XPO1/CRM1-mediated nuclear export, perhaps as export complex scaffolding protein. Bound to XPO1/CRM1, stabilizes the XPO1/CRM1-cargo interaction. In the absence of Ran-bound GTP prevents binding of XPO1/CRM1 to the nuclear pore complex. Binds to CHC1/RCC1 and increases the guanine nucleotide exchange activity of CHC1/RCC1. Recruits XPO1/CRM1 to CHC1/RCC1 in a Ran-dependent manner. Negative regulator of TGF-beta signaling through interaction with the R-SMAD proteins, SMAD2 and SMAD3, and mediating their nuclear export. This Homo sapiens (Human) protein is Ran-binding protein 3 (RANBP3).